A 98-amino-acid polypeptide reads, in one-letter code: NADH-ubiquinone oxidoreductase chain 4L (98 aa).

3 helical membrane passes run 2-22 (PSIS…MLMF), 29-49 (SLLC…LIIL), and 61-81 (ILLL…LVTV).

Belongs to the complex I subunit 4L family. Core subunit of respiratory chain NADH dehydrogenase (Complex I) which is composed of 45 different subunits.

The protein resides in the mitochondrion inner membrane. It carries out the reaction a ubiquinone + NADH + 5 H(+)(in) = a ubiquinol + NAD(+) + 4 H(+)(out). Functionally, core subunit of the mitochondrial membrane respiratory chain NADH dehydrogenase (Complex I) which catalyzes electron transfer from NADH through the respiratory chain, using ubiquinone as an electron acceptor. Part of the enzyme membrane arm which is embedded in the lipid bilayer and involved in proton translocation. In Microcebus mamiratra (Claire's mouse lemur), this protein is NADH-ubiquinone oxidoreductase chain 4L (MT-ND4L).